The following is a 237-amino-acid chain: LexA repressor (237 aa).

The H-T-H motif DNA-binding region spans 26-46; it reads FDEMKDALDLRSKSGIHRLIT. Catalysis depends on for autocatalytic cleavage activity residues Ser158 and Lys196.

This sequence belongs to the peptidase S24 family. In terms of assembly, homodimer.

It carries out the reaction Hydrolysis of Ala-|-Gly bond in repressor LexA.. In terms of biological role, represses a number of genes involved in the response to DNA damage (SOS response), including recA and lexA. In the presence of single-stranded DNA, RecA interacts with LexA causing an autocatalytic cleavage which disrupts the DNA-binding part of LexA, leading to derepression of the SOS regulon and eventually DNA repair. The sequence is that of LexA repressor from Rhodopseudomonas palustris (strain BisA53).